A 621-amino-acid polypeptide reads, in one-letter code: GPI-anchor transamidase component GPAA1 (621 aa).

Over 2–19 (GLLSDPVRRRALARLVLR) the chain is Cytoplasmic. The helical transmembrane segment at 20–41 (LNAPLCVLSYVAGIAWFLALVF) threads the bilayer. Residues 42 to 370 (PPLTQRTYMS…LLPGLSRFVS (329 aa)) lie on the Lumenal side of the membrane. 2 residues coordinate a 2-acyl-6-[6-phosphoethanolamine-alpha-D-mannosyl-(1-&gt;2)-6-phosphoethanolamine-alpha-D-mannosyl-(1-&gt;6)-2-phosphoethanolamine-alpha-D-mannosyl-(1-&gt;4)-alpha-D-glucosaminyl]-1-(1-radyl,2-acyl-sn-glycero-3-phospho)-1D-myo-inositol: Y49 and S51. N-linked (GlcNAc...) asparagine glycosylation occurs at N203. An intrachain disulfide couples C259 to C266. A 2-acyl-6-[6-phosphoethanolamine-alpha-D-mannosyl-(1-&gt;2)-6-phosphoethanolamine-alpha-D-mannosyl-(1-&gt;6)-2-phosphoethanolamine-alpha-D-mannosyl-(1-&gt;4)-alpha-D-glucosaminyl]-1-(1-radyl,2-acyl-sn-glycero-3-phospho)-1D-myo-inositol contacts are provided by H354, Q355, and S356. Q355 contacts Mg(2+). The helical transmembrane segment at 371–393 (IGLYMPAVGFLLLVLGLKALELW) threads the bilayer. The Cytoplasmic portion of the chain corresponds to 394–425 (MQLHEAGMGLEEPGGAPGPSVPLPPSQGVGLA). The helical transmembrane segment at 426–450 (SLVAPLLISQAMGLALYVLPVLGQH) threads the bilayer. Residues 451-462 (VATQHFPVAEAE) lie on the Lumenal side of the membrane. A helical transmembrane segment spans residues 463 to 483 (AVVLTLLAIYAAGLALPHNTH). The Cytoplasmic portion of the chain corresponds to 484–495 (RVVSTQAPDRGW). Helical transmembrane passes span 496 to 519 (MALK…TNFS) and 520 to 536 (LGFL…ALAK). The Cytoplasmic segment spans residues 537 to 540 (PHGP). A helical membrane pass occupies residues 541 to 563 (RTLYAALLVLTSPAATLLGSLFL). Over 564 to 597 (WRELQEAPLSLAEGWQLFLAALAQGVLEHHTYGA) the chain is Lumenal. A helical transmembrane segment spans residues 598–619 (LLFPLLSLGLYPCWLLFWNVLF). Over 620–621 (WK) the chain is Cytoplasmic.

As to quaternary structure, heteropentamer. Part of the GPI-anchor transamidase complex, consisting of PIGK, PIGT, PIGS, PIGU and GAA1. Interacts with PIGK. As to expression, ubiquitously expressed in fetal and adult tissues. Expressed at higher levels in fetal tissues than adult tissues.

It is found in the endoplasmic reticulum membrane. Its pathway is glycolipid biosynthesis; glycosylphosphatidylinositol-anchor biosynthesis. In terms of biological role, component of the glycosylphosphatidylinositol-anchor (GPI-anchor) transamidase (GPI-T) complex that catalyzes the formation of the linkage between a proprotein and a GPI-anchor and participates in GPI anchored protein biosynthesis. Binds GPI-anchor. This Homo sapiens (Human) protein is GPI-anchor transamidase component GPAA1.